The following is a 577-amino-acid chain: Acyl-coenzyme A synthetase ACSM2B, mitochondrial (577 aa).

The N-terminal 46 residues, 1 to 46 (MHWLRKVQGLCTLWGTQMSSRTLYINSRQLVSLQWGHQEVPAKFNF), are a transit peptide targeting the mitochondrion. A CoA-binding site is contributed by Q139. Residues 221–229 (TSGTSGLPK), 359–364 (EFYGQT), D446, and R461 contribute to the ATP site. T364 serves as a coordination point for substrate. 469–471 (SGY) is a binding site for CoA. R472 is a binding site for substrate. R501 provides a ligand contact to CoA. A Phosphoserine modification is found at S513. CoA contacts are provided by residues K532 and 540–542 (YPR). K557 provides a ligand contact to ATP.

Belongs to the ATP-dependent AMP-binding enzyme family. Monomer. Mg(2+) serves as cofactor. The cofactor is Mn(2+). As to expression, detected in liver.

The protein localises to the mitochondrion. The enzyme catalyses a medium-chain fatty acid + ATP + CoA = a medium-chain fatty acyl-CoA + AMP + diphosphate. It catalyses the reaction benzoate + ATP + CoA = benzoyl-CoA + AMP + diphosphate. It carries out the reaction hexanoate + ATP + CoA = hexanoyl-CoA + AMP + diphosphate. The catalysed reaction is butanoate + ATP + CoA = butanoyl-CoA + AMP + diphosphate. The enzyme catalyses octanoate + ATP + CoA = octanoyl-CoA + AMP + diphosphate. It catalyses the reaction decanoate + ATP + CoA = decanoyl-CoA + AMP + diphosphate. Its activity is regulated as follows. Activated by monovalent cations, such as potassium, rubidium or ammonium. Its function is as follows. Catalyzes the activation of fatty acids by CoA to produce an acyl-CoA, the first step in fatty acid metabolism. Capable of activating medium-chain fatty acids (e.g. butyric (C4) to decanoic (C10) acids), and certain carboxylate-containing xenobiotics, e.g. benzoate. The protein is Acyl-coenzyme A synthetase ACSM2B, mitochondrial (ACSM2B) of Homo sapiens (Human).